A 191-amino-acid polypeptide reads, in one-letter code: MIDLSAPAIEVAPLLLGATIWRGPVGIRLTEVEAYMGLDDPASHAFRGPTPRARVMFGPPSHIYVYLSYGMHRCVNLVCSPDGEASAVLLRGGQVIAGHDDARRRRGNVAENRLACGPGNMGSALGASLEESGNPVSIIGNGAISALGWRLEPAPEIAEFRQGPRVGISRNIDAPWRWWIPQDPTVSGPRT.

Belongs to the DNA glycosylase MPG family.

The polypeptide is Putative 3-methyladenine DNA glycosylase (Cutibacterium acnes (strain DSM 16379 / KPA171202) (Propionibacterium acnes)).